The primary structure comprises 351 residues: Probable dual-specificity RNA methyltransferase RlmN (351 aa).

The Proton acceptor role is filled by Glu-98. In terms of domain architecture, Radical SAM core spans 104 to 332 (TQKRLTVCVS…ASIRRSRGLD (229 aa)). Cysteines 111 and 337 form a disulfide. Residues Cys-118, Cys-122, and Cys-125 each contribute to the [4Fe-4S] cluster site. S-adenosyl-L-methionine contacts are provided by residues 165 to 166 (GE), Ser-195, 218 to 220 (SLH), and Asn-294. The active-site S-methylcysteine intermediate is the Cys-337.

The protein belongs to the radical SAM superfamily. RlmN family. [4Fe-4S] cluster serves as cofactor.

The protein localises to the cytoplasm. It catalyses the reaction adenosine(2503) in 23S rRNA + 2 reduced [2Fe-2S]-[ferredoxin] + 2 S-adenosyl-L-methionine = 2-methyladenosine(2503) in 23S rRNA + 5'-deoxyadenosine + L-methionine + 2 oxidized [2Fe-2S]-[ferredoxin] + S-adenosyl-L-homocysteine. The catalysed reaction is adenosine(37) in tRNA + 2 reduced [2Fe-2S]-[ferredoxin] + 2 S-adenosyl-L-methionine = 2-methyladenosine(37) in tRNA + 5'-deoxyadenosine + L-methionine + 2 oxidized [2Fe-2S]-[ferredoxin] + S-adenosyl-L-homocysteine. Its function is as follows. Specifically methylates position 2 of adenine 2503 in 23S rRNA and position 2 of adenine 37 in tRNAs. The chain is Probable dual-specificity RNA methyltransferase RlmN from Acaryochloris marina (strain MBIC 11017).